Consider the following 368-residue polypeptide: Phosphate acyltransferase (368 aa).

The disordered stretch occupies residues 334–368 (AAPLGESGRDANGAGQASPSAGQPAEPSAALSSKT).

It belongs to the PlsX family. As to quaternary structure, homodimer. Probably interacts with PlsY.

Its subcellular location is the cytoplasm. It catalyses the reaction a fatty acyl-[ACP] + phosphate = an acyl phosphate + holo-[ACP]. It functions in the pathway lipid metabolism; phospholipid metabolism. Catalyzes the reversible formation of acyl-phosphate (acyl-PO(4)) from acyl-[acyl-carrier-protein] (acyl-ACP). This enzyme utilizes acyl-ACP as fatty acyl donor, but not acyl-CoA. This chain is Phosphate acyltransferase, found in Burkholderia pseudomallei (strain 1106a).